Here is a 248-residue protein sequence, read N- to C-terminus: PF03932 family protein CutC (248 aa).

It belongs to the CutC family. Homodimer.

The protein localises to the cytoplasm. The protein is PF03932 family protein CutC of Shigella dysenteriae serotype 1 (strain Sd197).